A 273-amino-acid chain; its full sequence is HMP-PP phosphatase (273 aa).

Aspartate 8 serves as the catalytic Nucleophile. The Mg(2+) site is built by aspartate 8, aspartate 10, and aspartate 212.

It belongs to the HAD-like hydrolase superfamily. Cof family. It depends on Mg(2+) as a cofactor.

The enzyme catalyses 4-amino-2-methyl-5-(diphosphooxymethyl)pyrimidine + H2O = 4-amino-2-methyl-5-(phosphooxymethyl)pyrimidine + phosphate + H(+). Functionally, catalyzes the hydrolysis of 4-amino-2-methyl-5-hydroxymethylpyrimidine pyrophosphate (HMP-PP) to 4-amino-2-methyl-5-hydroxymethylpyrimidine phosphate (HMP-P). The chain is HMP-PP phosphatase from Yersinia pseudotuberculosis serotype O:1b (strain IP 31758).